Consider the following 66-residue polypeptide: Large ribosomal subunit protein bL35 (66 aa).

It belongs to the bacterial ribosomal protein bL35 family.

This Synechococcus sp. (strain ATCC 27144 / PCC 6301 / SAUG 1402/1) (Anacystis nidulans) protein is Large ribosomal subunit protein bL35.